The following is a 634-amino-acid chain: RING finger protein 207 (634 aa).

Residues 25–63 form an RING-type zinc finger; that stretch reads CHLCQEQYEHPCLLDCYHTFCASCLRGRVADSRLTCPVC. The B box-type; atypical zinc finger occupies 93–145; sequence EETVQCANCDLECKKQDVDAMYYCNTCCQPLCRDCRETTHKAKMFSRHEIVSL. 4 residues coordinate Zn(2+): cysteine 98, cysteine 101, cysteine 127, and histidine 132. The disordered stretch occupies residues 575–634; sequence YEDSTSTADTQPSNELSCNTEDNWTLNSLSEETNPKNKDYYRTNKQKNTTDSTNRKEIPM. Positions 577–606 are enriched in polar residues; that stretch reads DSTSTADTQPSNELSCNTEDNWTLNSLSEE. A compositionally biased stretch (basic and acidic residues) spans 607–616; that stretch reads TNPKNKDYYR.

The protein localises to the cytoplasm. In terms of biological role, plays a role in cardiac repolarization possibly by stabilizing membrane expression of the potassium channel kcnh6a/zerg, or by assisting its synthesis, folding or export from the endoplasmic reticulum, in a heat shock protein-dependent manner. This is RING finger protein 207 (rnf207b) from Danio rerio (Zebrafish).